The following is a 215-amino-acid chain: uncharacterized protein (215 aa).

Disordered regions lie at residues 1 to 144 (MPKG…PYLR) and 156 to 215 (IQGH…GAPA). Low complexity-rich tracts occupy residues 16-29 (ASTP…ASPT), 49-58 (SSSWPKSPIK), 85-96 (SGSSSPGPSSSR), and 104-127 (STAA…RAAP).

This is an uncharacterized protein from Homo sapiens (Human).